A 332-amino-acid chain; its full sequence is uncharacterized protein (332 aa).

A disordered region spans residues 306–332 (EKNTSEVTEPKTGPSGTKDNYHLHSIF).

This is an uncharacterized protein from Homo sapiens (Human).